A 219-amino-acid chain; its full sequence is Inner membrane protein YghB (219 aa).

Over 1–17 the chain is Cytoplasmic; it reads MAVIQDIIAALWQHDFA. A helical membrane pass occupies residues 18–38; the sequence is ALADPHIVSVVYFVMFATLFL. The Periplasmic portion of the chain corresponds to 39–67; sequence ENGLLPASFLPGDSLLILAGALIAQGVMD. Residues 68-88 traverse the membrane as a helical segment; the sequence is FLPTIAILTAAASLGCWLSYI. Over 89–160 the chain is Cytoplasmic; sequence QGRWLGNTKT…RRFQFFNWLS (72 aa). A helical membrane pass occupies residues 161 to 181; sequence GLLWVSVVTSFGYALSMIPFV. Residues 182 to 191 are Periplasmic-facing; that stretch reads KRHEDQVMTF. Residues 192 to 212 form a helical membrane-spanning segment; sequence LMILPIALLTAGLLGTLFVVI. The Cytoplasmic portion of the chain corresponds to 213–219; the sequence is KKKYCNA.

It belongs to the DedA family.

It localises to the cell inner membrane. The protein is Inner membrane protein YghB (yghB) of Escherichia coli O6:H1 (strain CFT073 / ATCC 700928 / UPEC).